Reading from the N-terminus, the 515-residue chain is Pre-glycoprotein polyprotein GP complex (515 aa).

Glycine 2 carries the N-myristoyl glycine; by host lipid modification. Topologically, residues 2–17 (GQVIGFFQSLPEIINE) are extracellular. Residues 18–33 (ALNIALICVALLATIK) traverse the membrane as a helical segment. The Cytoplasmic segment spans residues 34-58 (GMVNIWKSGLIQLLFFLTLAGRSCS). Residue cysteine 57 coordinates Zn(2+). The Extracellular portion of the chain corresponds to 59 to 453 (HSFTIGRFHE…QGRTPLSLVD (395 aa)). 4 cysteine pairs are disulfide-bonded: cysteine 87–cysteine 255, cysteine 300–cysteine 313, cysteine 322–cysteine 331, and cysteine 385–cysteine 406. N-linked (GlcNAc...) asparagine; by host glycosylation is found at asparagine 90, asparagine 112, asparagine 127, asparagine 180, and asparagine 248. Residues asparagine 386, asparagine 394, and asparagine 416 are each glycosylated (N-linked (GlcNAc...) asparagine; by host). The chain crosses the membrane as a helical span at residues 454-474 (LCFWSTLFYISTLFAHLVGFP). Over 475-515 (THRHLIGEGCPKPHRLTGSGICSCGHYGIPGKPVRWTKMSR) the chain is Cytoplasmic. Residues histidine 476, histidine 478, cysteine 484, histidine 488, cysteine 496, and cysteine 498 each contribute to the Zn(2+) site.

The protein belongs to the arenaviridae GPC protein family. Interacts with glycoprotein G2. Part of the GP complex (GP-C) together with glycoprotein G1 and glycoprotein G2. The GP-complex interacts with protein Z, which interacts with ribonucleocapsid; these interactions may induce virion budding. In terms of assembly, homotrimer; disulfide-linked. In pre-fusion state, G1 homotrimers bind G2 homotrimers via ionic interactions. Part of the GP complex (GP-C) together with glycoprotein G2 and the stable signal peptide. The GP-complex interacts with protein Z, which interacts with ribonucleocapsid; these interactions may induce virion budding. As to quaternary structure, homotrimer. Interacts with the stable signal peptide. In pre-fusion state, G2 homotrimers bind G1 homotrimers via ionic interactions. Part of the GP complex (GP-C) together with glycoprotein G1 and the stable signal peptide. Acidification in the endosome triggers rearrangements, which ultimately leads to a 6 helix bundle formed by the two heptad repeat domains (HR1 and HR2) in post-fusion state. The GP-complex interacts with protein Z, which interacts with ribonucleocapsid; these interactions may induce virion budding. Post-translationally, specific enzymatic cleavages in vivo yield mature proteins. GP-C polyprotein is cleaved in the endoplasmic reticulum by the host protease MBTPS1. Only cleaved glycoprotein is incorporated into virions. The SSP remains stably associated with the GP complex following cleavage by signal peptidase and plays crucial roles in the trafficking of GP through the secretory pathway. In terms of processing, myristoylation is necessary for GP2-mediated fusion activity.

The protein localises to the virion membrane. The protein resides in the host endoplasmic reticulum membrane. Its subcellular location is the host Golgi apparatus membrane. It localises to the host cell membrane. Functions as a cleaved signal peptide that is retained as the third component of the GP complex (GP-C). Helps to stabilize the spike complex in its native conformation. The SSP is required for efficient glycoprotein expression, post-translational maturation cleavage of G1 and G2, glycoprotein transport to the cell surface plasma membrane, formation of infectious virus particles, and acid pH-dependent glycoprotein-mediated cell fusion. In terms of biological role, forms the virion spikes together with glycoprotein G2. The glycoprotein spike trimers are connected to the underlying matrix. Mediates virus attachment to host receptor alpha-dystroglycan DAG1. This attachment induces virion internalization predominantly through clathrin- and caveolin-independent endocytosis. Its function is as follows. Forms the virion spikes together with glycoprotein G1. The glycoprotein spike trimers are connected to the underlying matrix. Class I viral fusion protein that directs fusion of viral and host endosomal membranes, leading to delivery of the nucleocapsid into the cytoplasm. Membrane fusion is mediated by irreversible conformational changes induced by acidification. This Latino mammarenavirus (isolate Rat/Bolivia/MARU 1924/1965) (LATV) protein is Pre-glycoprotein polyprotein GP complex.